The following is a 387-amino-acid chain: uncharacterized protein (387 aa).

To M.jannaschii MJ0043 N-terminal region.

This is an uncharacterized protein from Bacillus subtilis (strain 168).